The chain runs to 459 residues: Cysteine--tRNA ligase (459 aa).

Cys-31 provides a ligand contact to Zn(2+). Positions 33–43 (PTVYDNPHIGN) match the 'HIGH' region motif. Residues Cys-216, His-241, and Glu-245 each contribute to the Zn(2+) site. The 'KMSKS' region motif lies at 274 to 278 (KMSKS). An ATP-binding site is contributed by Lys-277.

It belongs to the class-I aminoacyl-tRNA synthetase family. As to quaternary structure, monomer. Zn(2+) is required as a cofactor.

Its subcellular location is the cytoplasm. The catalysed reaction is tRNA(Cys) + L-cysteine + ATP = L-cysteinyl-tRNA(Cys) + AMP + diphosphate. The protein is Cysteine--tRNA ligase of Rickettsia felis (strain ATCC VR-1525 / URRWXCal2) (Rickettsia azadi).